The following is a 144-amino-acid chain: MYPAHLLVLLAVCVSLLGASDIPPLPLNLYQFDNMIQCANKGKRATWHYMDYGCYCGSGGSGTPVDALDRCCKAHDDCYGVAEDNGCYPKWTLYSWQCTENVPTCNSESGCQKSVCACDATAAKCFAEAPYNNKNYNINTSNCQ.

A signal peptide spans 1-19 (MYPAHLLVLLAVCVSLLGA). A propeptide spanning residues 20 to 27 (SDIPPLPL) is cleaved from the precursor. 7 cysteine pairs are disulfide-bonded: C38–C98, C54–C143, C56–C72, C71–C125, C78–C118, C87–C111, and C105–C116. Ca(2+) is bound by residues Y55, G57, and G59. Residue H75 is part of the active site. D76 contributes to the Ca(2+) binding site. D119 is an active-site residue.

It belongs to the phospholipase A2 family. Group I subfamily. D49 sub-subfamily. Ca(2+) is required as a cofactor. Expressed by the venom gland.

Its subcellular location is the secreted. It catalyses the reaction a 1,2-diacyl-sn-glycero-3-phosphocholine + H2O = a 1-acyl-sn-glycero-3-phosphocholine + a fatty acid + H(+). Functionally, PLA2 catalyzes the calcium-dependent hydrolysis of the 2-acyl groups in 3-sn-phosphoglycerides. In Aipysurus laevis (Olive sea snake), this protein is Acidic phospholipase A2.